A 530-amino-acid polypeptide reads, in one-letter code: Seeligeriolysin (530 aa).

A signal peptide spans 1 to 25; that stretch reads MKIFGLVIMSLLFVSLPITQQPEAR. The disordered stretch occupies residues 36–55; it reads TISPAETPESPPATPKTPVE. 4 consecutive transmembrane segments (beta stranded) span residues 215 to 228, 235 to 244, 313 to 322, and 330 to 342; these read ESQL…AFKA, VNFEAISDGK, SNKVKTAFEA, and KGDV…IKNS. A Conserved undecapeptide motif is present at residues 484–494; it reads ECTGLFWEWWR. The short motif at 516–517 is the Cholesterol binding element; the sequence is TL.

It belongs to the cholesterol-dependent cytolysin family. Homooligomeric pore complex of 35 to 50 subunits; when inserted in the host membrane.

The protein localises to the secreted. Its subcellular location is the host cell membrane. Functionally, a cholesterol-dependent toxin that causes cytolysis by forming pores in cholesterol containing host membranes. L.seeligeri is non-pathogenic, perhaps in part because this protein is about 25% as toxic as listeriolysin O. Mutating a single residue in the undecapeptide increases toxicity 2-fold. After binding to target membranes, the protein undergoes a major conformation change, leading to its insertion in the host membrane and formation of an oligomeric pore complex. Cholesterol is required for binding to host membranes, membrane insertion and pore formation; cholesterol binding is mediated by a Thr-Leu pair in the C-terminus. Can be reversibly inactivated by oxidation. This Listeria seeligeri protein is Seeligeriolysin.